We begin with the raw amino-acid sequence, 192 residues long: Imidazoleglycerol-phosphate dehydratase (192 aa).

Belongs to the imidazoleglycerol-phosphate dehydratase family.

It localises to the cytoplasm. It carries out the reaction D-erythro-1-(imidazol-4-yl)glycerol 3-phosphate = 3-(imidazol-4-yl)-2-oxopropyl phosphate + H2O. It functions in the pathway amino-acid biosynthesis; L-histidine biosynthesis; L-histidine from 5-phospho-alpha-D-ribose 1-diphosphate: step 6/9. This Caldivirga maquilingensis (strain ATCC 700844 / DSM 13496 / JCM 10307 / IC-167) protein is Imidazoleglycerol-phosphate dehydratase.